The following is a 450-amino-acid chain: Phosphoglucosamine mutase (450 aa).

The active-site Phosphoserine intermediate is Ser102. Positions 102, 243, 245, and 247 each coordinate Mg(2+). At Ser102 the chain carries Phosphoserine.

This sequence belongs to the phosphohexose mutase family. Mg(2+) is required as a cofactor. Post-translationally, activated by phosphorylation.

It carries out the reaction alpha-D-glucosamine 1-phosphate = D-glucosamine 6-phosphate. Its function is as follows. Catalyzes the conversion of glucosamine-6-phosphate to glucosamine-1-phosphate. This chain is Phosphoglucosamine mutase, found in Rhizobium meliloti (strain 1021) (Ensifer meliloti).